Here is a 686-residue protein sequence, read N- to C-terminus: Eomesodermin homolog (686 aa).

A disordered region spans residues 27 to 46; that stretch reads GGSGGSAGHLPSAAPSPQKL. Positions 34 to 43 are enriched in low complexity; that stretch reads GHLPSAAPSP. A Phosphoserine modification is found at Ser-107. Positions 276–456 form a DNA-binding region, T-box; the sequence is LWLKFHRHQT…HNPFAKGFRD (181 aa). The tract at residues 571 to 686 is required for transcription activation; it reads AMAGWGGRGS…GGYYAFYTTP (116 aa). The disordered stretch occupies residues 639–686; the sequence is ACKRRRLSPSNSSNENSPSIKCEDINAEEYSKDTSKGMGGYYAFYTTP. The segment covering 646-657 has biased composition (low complexity); sequence SPSNSSNENSPS. Over residues 659 to 673 the composition is skewed to basic and acidic residues; the sequence is KCEDINAEEYSKDTS.

As to expression, expressed in CD8+ T-cells.

It is found in the nucleus. Its function is as follows. Functions as a transcriptional activator playing a crucial role during development. Functions in trophoblast differentiation and later in gastrulation, regulating both mesoderm delamination and endoderm specification. Plays a role in brain development being required for the specification and the proliferation of the intermediate progenitor cells and their progeny in the cerebral cortex. Required for differentiation and migration of unipolar dendritic brush cells. Also involved in the differentiation of CD8+ T-cells during immune response regulating the expression of lytic effector genes. The protein is Eomesodermin homolog (EOMES) of Homo sapiens (Human).